Here is a 982-residue protein sequence, read N- to C-terminus: Cell division cycle-associated protein 2 (982 aa).

Polar residues predominate over residues Val-75 to Gln-87. The interval Val-75–Val-97 is disordered. Phosphoserine occurs at positions 100, 122, and 133. Disordered stretches follow at residues Ser-192 to Ser-216 and Thr-274 to Ser-315. 2 stretches are compositionally biased toward polar residues: residues Ser-207–Ser-216 and Pro-275–Ser-315. Residues Ser-286, Ser-296, and Ser-306 each carry the phosphoserine modification. At Thr-309 the chain carries Phosphothreonine. The PP1-binding domain maps to Lys-379 to Asp-436. Residues Ser-390 and Ser-397 each carry the phosphoserine modification. Disordered stretches follow at residues Ala-400 to Ser-473, Thr-489 to Arg-545, Lys-568 to Val-638, and Ala-651 to Gln-716. Thr-402 carries the post-translational modification Phosphothreonine. Position 424 is a phosphoserine (Ser-424). 2 stretches are compositionally biased toward polar residues: residues Ser-451 to Ser-473 and Thr-498 to Ala-512. Residues Lys-518 to Arg-545 are compositionally biased toward basic residues. Phosphoserine is present on residues Ser-572 and Ser-595. Over residues Ala-651–Asn-668 the composition is skewed to polar residues. Residues Thr-669–Thr-685 show a composition bias toward basic and acidic residues. Ser-735 bears the Phosphoserine mark. Lys-741 is covalently cross-linked (Glycyl lysine isopeptide (Lys-Gly) (interchain with G-Cter in SUMO2)). Residues Glu-910–Pro-982 are disordered. Ser-913 is subject to Phosphoserine. A compositionally biased stretch (low complexity) spans Val-931 to Ser-942. Ser-950 carries the post-translational modification Phosphoserine. Over residues Cys-952–Gln-964 the composition is skewed to polar residues. Ser-973 is subject to Phosphoserine.

Interacts with PPP1CC. In terms of processing, phosphorylated by CDK1. May regulate its subcellular location.

Its subcellular location is the nucleus. Regulator of chromosome structure during mitosis required for condensin-depleted chromosomes to retain their compact architecture through anaphase. Acts by mediating the recruitment of phopsphatase PP1-gamma subunit (PPP1CC) to chromatin at anaphase and into the following interphase. At anaphase onset, its association with chromatin targets a pool of PPP1CC to dephosphorylate substrates. The polypeptide is Cell division cycle-associated protein 2 (Cdca2) (Mus musculus (Mouse)).